The following is a 141-amino-acid chain: MWNLYFLKLLIDVLNIKVKNFRIIKKMKRKYILKKESEITPVFKSKKRYGNSLFIIYYVKQTAFPHFKFALSVGKKYGKAHERNLIKRRLRAIIRSVSPCLNPKMFFVIVIKAQAKNLTFQQLKTFFLQFATKTRILLSNK.

Belongs to the RnpA family. In terms of assembly, consists of a catalytic RNA component (M1 or rnpB) and a protein subunit.

The enzyme catalyses Endonucleolytic cleavage of RNA, removing 5'-extranucleotides from tRNA precursor.. Functionally, RNaseP catalyzes the removal of the 5'-leader sequence from pre-tRNA to produce the mature 5'-terminus. It can also cleave other RNA substrates such as 4.5S RNA. The protein component plays an auxiliary but essential role in vivo by binding to the 5'-leader sequence and broadening the substrate specificity of the ribozyme. The chain is Ribonuclease P protein component from Onion yellows phytoplasma (strain OY-M).